We begin with the raw amino-acid sequence, 158 residues long: Rhombotin-2 (158 aa).

LIM zinc-binding domains lie at 30-89 and 94-153; these read CGGC…RLFG and CASC…EWTK.

As to quaternary structure, interacts via its LIM domains with ELF2 and LDB1. Also interacts with basic helix-loop-helix protein TAL1/SCL and can assemble in a complex with LMO2 and TAL1/SCL. Interacts with BEX2 and KDM5A.

Its subcellular location is the nucleus. In terms of biological role, acts with TAL1/SCL to regulate red blood cell development. Also acts with LDB1 to maintain erythroid precursors in an immature state. The sequence is that of Rhombotin-2 (LMO2) from Homo sapiens (Human).